Reading from the N-terminus, the 221-residue chain is Response regulator protein PmrA (221 aa).

A Response regulatory domain is found at 2–116 (RILLAEDDLL…ELQARVRALT (115 aa)). At Asp51 the chain carries 4-aspartylphosphate. Positions 124 to 218 (LPQLVHGELR…VRGIGYGIDQ (95 aa)) form a DNA-binding region, ompR/PhoB-type.

Its subcellular location is the cytoplasm. Its function is as follows. Member of the two-component regulatory system PmrA/PmrB that plays a role in the regulation of resistance towards polymyxin B and cationic antimicrobial peptides in response to limiting concentrations of Mg(2+). Functions as a transcriptional activator by direct binding to a cis-acting sequence upstream of the target gene promoters including lipase lipA and pmrH promoters. Also autoregulates its own pmrAB operon under Mg(2+)-limiting conditions. The polypeptide is Response regulator protein PmrA (pmrA) (Pseudomonas aeruginosa (strain ATCC 15692 / DSM 22644 / CIP 104116 / JCM 14847 / LMG 12228 / 1C / PRS 101 / PAO1)).